The primary structure comprises 274 residues: MSLEKSLDEIINERTNGFDHKHSRRRGSQNRISKKSRLTYKFKRASKEHNSSPDDGPWQHDLDQEQDAHPRTTHLQKRQHSENRFGVRVENLHYQVLEKDVLSLFENFHPIRVIMNYDRAGRSEGSCDVYFETSQDAEDAQKTLQSTNLKGSEIQISKKSPPSLFDRISDMPHSARKPSRSSRSNRGFNRSSKKDDRSFRSSSKKSSNNSISHEDLDKELDEYAMSFHAASTVSSHSSQDFTPSIANAHEKNEPVAPSKDSNLTEEMDLQMEAV.

The segment covering 1–20 (MSLEKSLDEIINERTNGFDH) has biased composition (basic and acidic residues). Disordered stretches follow at residues 1–63 (MSLE…HDLD), 148–217 (NLKG…EDLD), and 230–274 (ASTV…MEAV). A compositionally biased stretch (basic residues) spans 21 to 44 (KHSRRRGSQNRISKKSRLTYKFKR). The span at 45-63 (ASKEHNSSPDDGPWQHDLD) shows a compositional bias: basic and acidic residues. Residues 85-161 (FGVRVENLHY…SEIQISKKSP (77 aa)) enclose the RRM domain. Residues 148-160 (NLKGSEIQISKKS) are compositionally biased toward polar residues. Composition is skewed to low complexity over residues 181 to 190 (SSRSNRGFNR) and 200 to 211 (RSSSKKSSNNSI). Residues 230–245 (ASTVSSHSSQDFTPSI) show a composition bias toward polar residues. Over residues 263–274 (LTEEMDLQMEAV) the composition is skewed to acidic residues.

This is an uncharacterized protein from Schizosaccharomyces pombe (strain 972 / ATCC 24843) (Fission yeast).